The chain runs to 470 residues: Sorting nexin-17 (470 aa).

One can recognise a PX domain in the interval M1–T109. A 1,2-diacyl-sn-glycero-3-phospho-(1D-myo-inositol-3-phosphate) is bound by residues R36, S38, K62, and R75. Positions E115 to W206 constitute a Ras-associating domain. The tract at residues E115–L432 is FERM-like. Residues G270–L432 are PTB-like F3 module. A disordered region spans residues G401–S425. A phosphoserine mark is found at S407, S409, S415, S421, S437, and S440.

Belongs to the sorting nexin family. Monomer. Interacts with APP (via cytoplasmic YXNPXY motif). Interacts with KIF1B. Interacts with the C-termini of P-selectin, PTC, LDLR, VLDLR, LRP1 and LRP8. Interacts with KRIT1 (via N-terminus). Interacts with HRAS. Interacts with ITGB1 and ITGB5 (via NPxY motif). Interacts with CCDC22 and CCDC93; the interaction associates SNX17 with the CCC complex. Interacts (via C-terminus) with VPS26C and VPS35L; the interactions are direct and associate SNX17 with the retriever complex.

It localises to the cytoplasm. Its subcellular location is the early endosome. The protein resides in the cytoplasmic vesicle membrane. Critical regulator of endosomal recycling of numerous surface proteins, including integrins, signaling receptor and channels. Binds to NPxY sequences in the cytoplasmic tails of target cargos. Associates with retriever and CCC complexes to prevent lysosomal degradation and promote cell surface recycling of numerous cargos such as integrins ITGB1, ITGB5 and their associated alpha subunits. Also required for maintenance of normal cell surface levels of APP and LRP1. Interacts with membranes containing phosphatidylinositol 3-phosphate (PtdIns(3P)). This chain is Sorting nexin-17 (Snx17), found in Rattus norvegicus (Rat).